The following is a 150-amino-acid chain: 5-hydroxytryptamine receptor 1B (150 aa).

At 1–83 (VEARSRILKQ…AARERKATKT (83 aa)) the chain is on the extracellular side. The span at 27 to 40 (DSPGSTSSVTSINS) shows a compositional bias: polar residues. Residues 27-50 (DSPGSTSSVTSINSRAPDLPSESG) form a disordered region. Residues 84-105 (LGIILGAFIVCWLPFFIISLAM) form a helical membrane-spanning segment. The Cytoplasmic segment spans residues 106–115 (PICKDACWFH). A helical membrane pass occupies residues 116–138 (LAIFDFFTWLGYLNSLINPIIYT). An NPxxY motif; important for ligand-induced conformation changes and signaling motif is present at residues 133–137 (NPIIY). The Extracellular segment spans residues 139–150 (MFNEDFKQAFHK).

The protein belongs to the G-protein coupled receptor 1 family. As to quaternary structure, homodimer. Heterodimer with HTR1D. In terms of processing, phosphorylated. Desensitization of the receptor may be mediated by its phosphorylation. Palmitoylated.

The protein localises to the cell membrane. G-protein coupled receptor for 5-hydroxytryptamine (serotonin). Also functions as a receptor for ergot alkaloid derivatives, various anxiolytic and antidepressant drugs and other psychoactive substances, such as lysergic acid diethylamide (LSD). Ligand binding causes a conformation change that triggers signaling via guanine nucleotide-binding proteins (G proteins) and modulates the activity of downstream effectors, such as adenylate cyclase. HTR1B is coupled to G(i)/G(o) G alpha proteins and mediates inhibitory neurotransmission by inhibiting adenylate cyclase activity. Arrestin family members inhibit signaling via G proteins and mediate activation of alternative signaling pathways. Regulates the release of 5-hydroxytryptamine, dopamine and acetylcholine in the brain, and thereby affects neural activity, nociceptive processing, pain perception, mood and behavior. Besides, plays a role in vasoconstriction of cerebral arteries. In Sus scrofa (Pig), this protein is 5-hydroxytryptamine receptor 1B (HTR1B).